A 387-amino-acid chain; its full sequence is MAVKVLVVDDSGFFRRRVTEILSSDPNIVVVGTATNGKEAIEQALALKPDVITMDYEMPMMDGITAVRHIMQRIPTPVLMFSSLTHEGARVTLDALDAGAVDFLPKNFEDISRNPQKVKQLLCEKINSISRSNRRSSGFGAASAASAAAPAAPTSSSRAPAPTTAPARAVPTRTAAPATAPAAHAHHAPAHPTTSGTPKRKAYKLVAIGTSTGGPVALQRVLTQLPASFPAPLVLIQHMPAAFTKAFAERLDKLCKISVKEAEDGDVLRPGLALLAPGGKQMMVDARGTVKILPGDERLNYKPCVDITFGSAAKSYGDKVLSVVLTGMGADGREGARLLKQAGSTVWAQDEASCVIYGMPMAIVKAELADAIYSLDDIGRHLVEACL.

Positions 4 to 121 (KVLVVDDSGF…SRNPQKVKQL (118 aa)) constitute a Response regulatory domain. Asp-55 carries the 4-aspartylphosphate modification. Positions 148–183 (AAPAAPTSSSRAPAPTTAPARAVPTRTAAPATAPAA) are enriched in low complexity. A disordered region spans residues 148–199 (AAPAAPTSSSRAPAPTTAPARAVPTRTAAPATAPAAHAHHAPAHPTTSGTPK). A CheB-type methylesterase domain is found at 192–384 (PTTSGTPKRK…LDDIGRHLVE (193 aa)). Active-site residues include Ser-211, His-238, and Asp-331.

This sequence belongs to the CheB family. Post-translationally, phosphorylated by CheA. Phosphorylation of the N-terminal regulatory domain activates the methylesterase activity.

It is found in the cytoplasm. It carries out the reaction [protein]-L-glutamate 5-O-methyl ester + H2O = L-glutamyl-[protein] + methanol + H(+). It catalyses the reaction L-glutaminyl-[protein] + H2O = L-glutamyl-[protein] + NH4(+). Involved in chemotaxis. Part of a chemotaxis signal transduction system that modulates chemotaxis in response to various stimuli. Catalyzes the demethylation of specific methylglutamate residues introduced into the chemoreceptors (methyl-accepting chemotaxis proteins or MCP) by CheR. Also mediates the irreversible deamidation of specific glutamine residues to glutamic acid. This Pseudomonas savastanoi pv. phaseolicola (strain 1448A / Race 6) (Pseudomonas syringae pv. phaseolicola (strain 1448A / Race 6)) protein is Protein-glutamate methylesterase/protein-glutamine glutaminase 2.